Reading from the N-terminus, the 63-residue chain is Prokaryotic ubiquitin-like protein Pup (63 aa).

Positions 1–35 (MSGQQSQINAGGGNGQGGDTPEFDAGQVSINSAGT) are disordered. The tract at residues 19–57 (DTPEFDAGQVSINSAGTDDLLDEIDGLLESNAEEFVRSY) is ARC ATPase binding. Glu63 is covalently cross-linked (Isoglutamyl lysine isopeptide (Glu-Lys) (interchain with K-? in acceptor proteins)).

The protein belongs to the prokaryotic ubiquitin-like protein family. As to quaternary structure, strongly interacts with the proteasome-associated ATPase ARC through a hydrophobic interface; the interacting region of Pup lies in its C-terminal half. There is one Pup binding site per ARC hexamer ring.

It participates in protein degradation; proteasomal Pup-dependent pathway. Its function is as follows. Protein modifier that is covalently attached to lysine residues of substrate proteins, thereby targeting them for proteasomal degradation. The tagging system is termed pupylation. The polypeptide is Prokaryotic ubiquitin-like protein Pup (Corynebacterium aurimucosum (strain ATCC 700975 / DSM 44827 / CIP 107346 / CN-1) (Corynebacterium nigricans)).